We begin with the raw amino-acid sequence, 556 residues long: 2-succinyl-5-enolpyruvyl-6-hydroxy-3-cyclohexene-1-carboxylate synthase (556 aa).

It belongs to the TPP enzyme family. MenD subfamily. Homodimer. It depends on Mg(2+) as a cofactor. Requires Mn(2+) as cofactor. Thiamine diphosphate serves as cofactor.

The catalysed reaction is isochorismate + 2-oxoglutarate + H(+) = 5-enolpyruvoyl-6-hydroxy-2-succinyl-cyclohex-3-ene-1-carboxylate + CO2. It functions in the pathway quinol/quinone metabolism; 1,4-dihydroxy-2-naphthoate biosynthesis; 1,4-dihydroxy-2-naphthoate from chorismate: step 2/7. The protein operates within quinol/quinone metabolism; menaquinone biosynthesis. In terms of biological role, catalyzes the thiamine diphosphate-dependent decarboxylation of 2-oxoglutarate and the subsequent addition of the resulting succinic semialdehyde-thiamine pyrophosphate anion to isochorismate to yield 2-succinyl-5-enolpyruvyl-6-hydroxy-3-cyclohexene-1-carboxylate (SEPHCHC). This is 2-succinyl-5-enolpyruvyl-6-hydroxy-3-cyclohexene-1-carboxylate synthase from Escherichia coli O45:K1 (strain S88 / ExPEC).